Consider the following 260-residue polypeptide: MFDIGVNLTSSQFAKDRDDVVARAFDAGVNGLLITGTNLRESQQAQKLARQYSSCWSTAGVHPHDSSQWQAATEEAIIELAAQPEVVAIGECGLDFNRNFSTPEEQERAFVAQLRIAAELNMPVFMHCRDAHERFMTLLEPWLDKLPGAVLHCFTGTREEMQACVARGIYIGITGWVCDERRGLELRELLPLIPAEKLLIETDAPYLLPRDLTPKPSSRRNEPAHLPHILQRIAHWRGEDAAWLAATTDANVKTLFGIAF.

3 residues coordinate a divalent metal cation: E91, H127, and H152.

It belongs to the metallo-dependent hydrolases superfamily. TatD-type hydrolase family. TatD subfamily. Monomer. Mg(2+) is required as a cofactor.

Its subcellular location is the cytoplasm. In terms of biological role, 3'-5' exonuclease that prefers single-stranded DNA and RNA. May play a role in the H(2)O(2)-induced DNA damage repair. The chain is 3'-5' ssDNA/RNA exonuclease TatD from Shigella flexneri serotype 5b (strain 8401).